The primary structure comprises 667 residues: Putative L-type lectin-domain containing receptor kinase I.4 (667 aa).

The N-terminal stretch at 1-21 (MDCRLHLVLFFSCVCLICLSG) is a signal peptide. At 22 to 294 (QQETGFVYNG…PREEKKKLHP (273 aa)) the chain is on the extracellular side. Residues 24-257 (ETGFVYNGFH…NQYILGWSFS (234 aa)) form a legume-lectin like region. 7 N-linked (GlcNAc...) asparagine glycosylation sites follow: Asn55, Asn110, Asn124, Asn128, Asn181, Asn204, and Asn225. The chain crosses the membrane as a helical span at residues 295 to 315 (LLIGLVILLVIPVLMVLGGVY). Topologically, residues 316-667 (WYRRKKYAEV…THSILEGYGR (352 aa)) are cytoplasmic. A Protein kinase domain is found at 350–625 (FVKDALVGKG…QYLSQKQPLP (276 aa)). ATP contacts are provided by residues 356 to 364 (VGKGGFGKV) and Lys378. Asp474 serves as the catalytic Proton acceptor.

The protein in the C-terminal section; belongs to the protein kinase superfamily. Ser/Thr protein kinase family. In the N-terminal section; belongs to the leguminous lectin family.

Its subcellular location is the cell membrane. It catalyses the reaction L-seryl-[protein] + ATP = O-phospho-L-seryl-[protein] + ADP + H(+). The enzyme catalyses L-threonyl-[protein] + ATP = O-phospho-L-threonyl-[protein] + ADP + H(+). The chain is Putative L-type lectin-domain containing receptor kinase I.4 (LECRK14) from Arabidopsis thaliana (Mouse-ear cress).